The following is a 264-amino-acid chain: Thymidylate synthase (264 aa).

Arg21 is a binding site for dUMP. His51 contacts (6R)-5,10-methylene-5,6,7,8-tetrahydrofolate. 126–127 (RR) contributes to the dUMP binding site. Cys146 (nucleophile) is an active-site residue. DUMP contacts are provided by residues 166–169 (RSCD), Asn177, and 207–209 (HLY). Asp169 contributes to the (6R)-5,10-methylene-5,6,7,8-tetrahydrofolate binding site. Ala263 provides a ligand contact to (6R)-5,10-methylene-5,6,7,8-tetrahydrofolate.

It belongs to the thymidylate synthase family. Bacterial-type ThyA subfamily. As to quaternary structure, homodimer.

It is found in the cytoplasm. The catalysed reaction is dUMP + (6R)-5,10-methylene-5,6,7,8-tetrahydrofolate = 7,8-dihydrofolate + dTMP. It functions in the pathway pyrimidine metabolism; dTTP biosynthesis. Catalyzes the reductive methylation of 2'-deoxyuridine-5'-monophosphate (dUMP) to 2'-deoxythymidine-5'-monophosphate (dTMP) while utilizing 5,10-methylenetetrahydrofolate (mTHF) as the methyl donor and reductant in the reaction, yielding dihydrofolate (DHF) as a by-product. This enzymatic reaction provides an intracellular de novo source of dTMP, an essential precursor for DNA biosynthesis. The sequence is that of Thymidylate synthase from Photorhabdus laumondii subsp. laumondii (strain DSM 15139 / CIP 105565 / TT01) (Photorhabdus luminescens subsp. laumondii).